A 1173-amino-acid chain; its full sequence is Pumilio homolog 2 (1173 aa).

5 disordered regions span residues 41–68, 265–296, 480–518, 592–662, and 730–759; these read VSSA…PLSG, VSKL…ASPT, QQAA…ESLA, LTGA…SLGF, and PISM…SSSL. The span at 287–296 shows a compositional bias: polar residues; it reads TPGSRQASPT. A compositionally biased stretch (low complexity) spans 480 to 492; that stretch reads QQAATQASQGQQQ. Positions 493 to 518 are enriched in polar residues; that stretch reads VMRATSNQRPLTPNQAQQGQQPESLA. Positions 606–622 are enriched in low complexity; sequence QQQQQQQQQQHQQQQQQ. Over residues 623–633 the composition is skewed to polar residues; sequence PNANLHSNSFY. Residues 634-657 show a composition bias toward low complexity; sequence GNSTMSNNSQSSSLFSPGPGQPGS. Residues 815-1155 form the PUM-HD domain; that stretch reads GRSRLLEDFR…HILAKLEKYY (341 aa). Pumilio repeat units follow at residues 835-870, 871-906, 907-942, 943-978, 979-1014, 1015-1050, 1051-1086, 1087-1129, and 1130-1167; these read DLMG…LVFS, EILQ…ALAT, RIRG…EMVR, ELDG…FIIE, AFKG…PILE, ELHQ…KIVC, EVRG…FLID, EICC…IIMH, and KIRP…LLVG. Residues 850 to 854 are adenine-nucleotide binding in RNA target; that stretch reads SRFIQ. The tract at residues 886–890 is uracil-nucleotide binding in RNA target; it reads NYVIQ. Residues 922–926 form an adenine-nucleotide binding in RNA target region; the sequence is CRVIQ. The interval 958–962 is non-specific-nucleotide binding in RNA target; sequence NHVVQ. Residues 994 to 998 form an adenine-nucleotide binding in RNA target region; that stretch reads CRVIQ. The tract at residues 1030 to 1034 is uracil-nucleotide binding in RNA target; that stretch reads NYVIQ. A guanine-nucleotide binding in RNA target region spans residues 1066-1070; the sequence is SNVVE. The interval 1109–1113 is uracil-nucleotide binding in RNA target; it reads NYVVQ.

Component of a complex with papd4, sympk, tacc3, parn, dazl and cpeb1. Phosphorylated.

It is found in the cytoplasm. Its subcellular location is the P-body. It localises to the cytoplasmic granule. Its function is as follows. Sequence-specific RNA-binding protein that acts as a post-transcriptional repressor by binding the 3'-UTR of mRNA targets. Binds to an RNA consensus sequence, the Pumilio Response Element (PRE), 5'-UGUANAUA-3', that is related to the Nanos Response Element (NRE). Mediates post-transcriptional repression of transcripts via different mechanisms: acts via direct recruitment of deadenylase complexes leading to translational inhibition and mRNA degradation. Also mediates deadenylation-independent repression by promoting accessibility of miRNAs. The sequence is that of Pumilio homolog 2 (pum2) from Xenopus laevis (African clawed frog).